Here is a 208-residue protein sequence, read N- to C-terminus: Small ribosomal subunit protein uS4A (208 aa).

The S4 RNA-binding domain maps to 98 to 161 (LRLDNVVFRM…RKVLRISEAL (64 aa)).

Belongs to the universal ribosomal protein uS4 family. Part of the 30S ribosomal subunit. Contacts protein S5. The interaction surface between S4 and S5 is involved in control of translational fidelity.

Functionally, one of the primary rRNA binding proteins, it binds directly to 16S rRNA where it nucleates assembly of the body of the 30S subunit. In terms of biological role, with S5 and S12 plays an important role in translational accuracy. The sequence is that of Small ribosomal subunit protein uS4A from Myxococcus xanthus (strain DK1622).